The primary structure comprises 121 residues: UPF0145 protein SGR_4080 (121 aa).

The protein belongs to the UPF0145 family.

This is UPF0145 protein SGR_4080 from Streptomyces griseus subsp. griseus (strain JCM 4626 / CBS 651.72 / NBRC 13350 / KCC S-0626 / ISP 5235).